The primary structure comprises 453 residues: tRNA modification GTPase MnmE (453 aa).

Arg-22, Glu-79, and Lys-119 together coordinate (6S)-5-formyl-5,6,7,8-tetrahydrofolate. The TrmE-type G domain maps to 215 to 376 (GMKVVIAGRP…LQQHLKSLMG (162 aa)). Asn-225 lines the K(+) pocket. Residues 225–230 (NAGKSS), 244–250 (TEIAGTT), 269–272 (DTAG), and 334–337 (NKAD) each bind GTP. Ser-229 contacts Mg(2+). The K(+) site is built by Thr-244, Ile-246, and Thr-249. Thr-250 is a Mg(2+) binding site. Residue Lys-453 participates in (6S)-5-formyl-5,6,7,8-tetrahydrofolate binding.

Belongs to the TRAFAC class TrmE-Era-EngA-EngB-Septin-like GTPase superfamily. TrmE GTPase family. As to quaternary structure, homodimer. Heterotetramer of two MnmE and two MnmG subunits. Requires K(+) as cofactor.

It localises to the cytoplasm. Exhibits a very high intrinsic GTPase hydrolysis rate. Involved in the addition of a carboxymethylaminomethyl (cmnm) group at the wobble position (U34) of certain tRNAs, forming tRNA-cmnm(5)s(2)U34. The chain is tRNA modification GTPase MnmE from Shewanella woodyi (strain ATCC 51908 / MS32).